Here is a 1154-residue protein sequence, read N- to C-terminus: DNA-directed RNA polymerase subunit beta (1154 aa).

The segment covering 1108-1123 (ELGIDIQGEDRSERAG) has biased composition (basic and acidic residues). The disordered stretch occupies residues 1108 to 1136 (ELGIDIQGEDRSERAGEPASPDEMDDEEE). The span at 1127-1136 (SPDEMDDEEE) shows a compositional bias: acidic residues.

Belongs to the RNA polymerase beta chain family. As to quaternary structure, the RNAP catalytic core consists of 2 alpha, 1 beta, 1 beta' and 1 omega subunit. When a sigma factor is associated with the core the holoenzyme is formed, which can initiate transcription.

The enzyme catalyses RNA(n) + a ribonucleoside 5'-triphosphate = RNA(n+1) + diphosphate. In terms of biological role, DNA-dependent RNA polymerase catalyzes the transcription of DNA into RNA using the four ribonucleoside triphosphates as substrates. This is DNA-directed RNA polymerase subunit beta from Heliobacterium modesticaldum (strain ATCC 51547 / Ice1).